Reading from the N-terminus, the 134-residue chain is ATP synthase epsilon chain (134 aa).

The protein belongs to the ATPase epsilon chain family. As to quaternary structure, F-type ATPases have 2 components, CF(1) - the catalytic core - and CF(0) - the membrane proton channel. CF(1) has five subunits: alpha(3), beta(3), gamma(1), delta(1), epsilon(1). CF(0) has three main subunits: a, b and c.

It localises to the cell membrane. Produces ATP from ADP in the presence of a proton gradient across the membrane. In Anoxybacillus flavithermus (strain DSM 21510 / WK1), this protein is ATP synthase epsilon chain.